The following is a 677-amino-acid chain: Protein PALS1 (677 aa).

The tract at residues 1–347 is required for the correct localization of PALS1 and PATJ at cell-cell contacts and the normal formation of tight junctions and adherens junctions; sequence MTTSHMNGYV…AQIKSPPIKE (347 aa). The disordered stretch occupies residues 39–81; sequence ELGARTLPVRRSAQLEKIRQQQEDRRRREEEGRSRQELDLNSS. The span at 51-76 shows a compositional bias: basic and acidic residues; sequence AQLEKIRQQQEDRRRREEEGRSRQEL. L27 domains lie at 121-178 and 180-236; these read ALLE…NRPS and PYPL…MQLE. The region spanning 258–338 is the PDZ domain; that stretch reads IVRIEKAKDI…VLSFVLIPSA (81 aa). Residues 347–419 enclose the SH3 domain; the sequence is ETVVHVKAHF…PGKSFQQQRE (73 aa). Residues 481–662 enclose the Guanylate kinase-like domain; that stretch reads KRPIALIGPP…SYQELLRLIN (182 aa). 488–495 provides a ligand contact to ATP; it reads GPPNCGQN. A disordered region spans residues 506 to 526; the sequence is PDRFAGPVPHTTRSRRDAEAN.

Belongs to the MAGUK family. Expressed in the retina and in the neural tube.

It is found in the apical cell membrane. Its subcellular location is the cell junction. The protein resides in the tight junction. Plays a role in tight junction biogenesis and in the establishment of cell polarity in epithelial cells. Also involved in adherens junction biogenesis. Required for polarized epithelial organization, cell-cell adhesion and remodeling of myocardial cells during heart tube elongation during embryogenesis. Functions in cellular patterning of the retina and development of the retinal pigmented epithelium. Also required for embryo body axis specification. The protein is Protein PALS1 (pals1a) of Danio rerio (Zebrafish).